The primary structure comprises 228 residues: L-ribulose-5-phosphate 4-epimerase UlaF (228 aa).

Substrate is bound by residues 26–27 (GN), 43–44 (SG), and 72–73 (SS). Asp74, His93, and His95 together coordinate Zn(2+). Residue Asp118 is the Proton donor/acceptor of the active site. Zn(2+) is bound at residue His167. The Proton donor/acceptor role is filled by Tyr225.

The protein belongs to the aldolase class II family. AraD/FucA subfamily. Zn(2+) is required as a cofactor.

It catalyses the reaction L-ribulose 5-phosphate = D-xylulose 5-phosphate. Its pathway is cofactor degradation; L-ascorbate degradation; D-xylulose 5-phosphate from L-ascorbate: step 4/4. In terms of biological role, catalyzes the isomerization of L-ribulose 5-phosphate to D-xylulose 5-phosphate. Is involved in the anaerobic L-ascorbate utilization. The sequence is that of L-ribulose-5-phosphate 4-epimerase UlaF from Salmonella paratyphi B (strain ATCC BAA-1250 / SPB7).